Consider the following 40-residue polypeptide: Peroxisomal LYS1 stabilizing protein 1 (40 aa).

A compositionally biased stretch (polar residues) spans 1-10 (MTAKTKQSWN). A disordered region spans residues 1-20 (MTAKTKQSWNKGIWENGKQG).

Its subcellular location is the cytoplasm. It is found in the cytosol. The protein resides in the peroxisome matrix. Functionally, modulates the lysine biosynthesis pathway, possibly by stabilizing the lysine biosynthesis LYS1 protein in lysine-deplete conditions. This is Peroxisomal LYS1 stabilizing protein 1 from Saccharomyces cerevisiae (strain ATCC 204508 / S288c) (Baker's yeast).